A 344-amino-acid chain; its full sequence is Phosphoribosylformylglycinamidine cyclo-ligase (344 aa).

Belongs to the AIR synthase family.

Its subcellular location is the cytoplasm. The enzyme catalyses 2-formamido-N(1)-(5-O-phospho-beta-D-ribosyl)acetamidine + ATP = 5-amino-1-(5-phospho-beta-D-ribosyl)imidazole + ADP + phosphate + H(+). Its pathway is purine metabolism; IMP biosynthesis via de novo pathway; 5-amino-1-(5-phospho-D-ribosyl)imidazole from N(2)-formyl-N(1)-(5-phospho-D-ribosyl)glycinamide: step 2/2. The chain is Phosphoribosylformylglycinamidine cyclo-ligase from Glaesserella parasuis serovar 5 (strain SH0165) (Haemophilus parasuis).